Here is a 325-residue protein sequence, read N- to C-terminus: Chain length determinant protein (325 aa).

The Cytoplasmic segment spans residues 1–31 (MRVENNNVSGQNLDPEQIDLIDLLVQLWRGK). Residues 32 to 52 (MTIIISVIVAIVLAIGYLVVA) traverse the membrane as a helical segment. Over 53–294 (KEKWTSTAIV…LPIRRDSPKK (242 aa)) the chain is Periplasmic. A helical membrane pass occupies residues 295–315 (AITLILAVLLGGMVGAGIVLG). The Cytoplasmic segment spans residues 316–325 (RNALRNYNAK).

Belongs to the WzzB/Cld/Rol family.

The protein localises to the cell inner membrane. It functions in the pathway bacterial outer membrane biogenesis; lipopolysaccharide biosynthesis. Confers a modal distribution of chain length on the O-antigen component of lipopolysaccharide (LPS). Gives rise to a reduced number of short chain molecules and increases in numbers of longer molecules, with a modal value of 13 (in strain O111/M92) and of 17 (in strain K12). This is Chain length determinant protein (wzzB) from Escherichia coli.